Consider the following 346-residue polypeptide: Probable WRKY transcription factor 54 (346 aa).

The disordered stretch occupies residues 109-130 (PVSCNGGDSGESKKKRLGVGKG). Residues 121 to 130 (KKKRLGVGKG) show a composition bias toward basic residues. The WRKY DNA-binding region spans 146 to 214 (VEAKSSEDRY…YIGYHTCTAN (69 aa)). A compositionally biased stretch (basic and acidic residues) spans 267-282 (VKEEQNNNGDQSKDYY). Residues 267–286 (VKEEQNNNGDQSKDYYEGSS) form a disordered region.

It belongs to the WRKY group III family. Interacts with WRKY30. Binds to BZR2/BES1 to cooperatively regulate the expression of target genes. Interacts with ASK7/BIN2. Phosphorylated and destabilized by ASK7/BIN2. Expressed in leaves.

The protein resides in the nucleus. In terms of biological role, transcription factor. Interacts specifically with the W box (5'-(T)TGAC[CT]-3'), a frequently occurring elicitor-responsive cis-acting element. Together with WRKY70, negative regulator of developmental senescence, probably via the regulation of several senescence-associated markers genes. Positive regulator of EDS1-dependent defense against E.amylovora. In collaboration with WRKY70, prevents stomatal closure and, consequently, osmotic stress tolerance. Together with WRKY46 and WRKY70, promotes brassinosteroid (BR)-regulated plant growth but prevent drought response by modulating gene expression. Negative regulator of SA biosynthesis. Prevents defense response to the necrotrophic pathogens P.carotovorum and B.cinerea, but promotes defense against biotrophic/hemibiotrophic pathogens P.syringae pv. tomato (Pst) DC3000, probably by regulating negatively the jasmonic acid (JA)/ethylene (ET) and positively the salicylic acid (SA) signaling pathways. The protein is Probable WRKY transcription factor 54 of Arabidopsis thaliana (Mouse-ear cress).